Consider the following 205-residue polypeptide: Large ribosomal subunit protein bL25 (205 aa).

Residues 185–205 (PAGAVSEAAEGGEAAGETPAA) form a disordered region. Residues 186 to 205 (AGAVSEAAEGGEAAGETPAA) are compositionally biased toward low complexity.

This sequence belongs to the bacterial ribosomal protein bL25 family. CTC subfamily. In terms of assembly, part of the 50S ribosomal subunit; part of the 5S rRNA/L5/L18/L25 subcomplex. Contacts the 5S rRNA. Binds to the 5S rRNA independently of L5 and L18.

In terms of biological role, this is one of the proteins that binds to the 5S RNA in the ribosome where it forms part of the central protuberance. The protein is Large ribosomal subunit protein bL25 of Cupriavidus taiwanensis (strain DSM 17343 / BCRC 17206 / CCUG 44338 / CIP 107171 / LMG 19424 / R1) (Ralstonia taiwanensis (strain LMG 19424)).